The following is a 335-amino-acid chain: MQTAVQTQTTVQTLLTPRFYTTDFDQMAKYDISKNRAEIEAIVNEFRKDYNQTHFIRDDEFDQVWTQMPESKRQWFKEFLERSCTAEFSGFLLYKELSRRLKDTNPLLAEGFGYMSRDEARHAGFLNKAMADFGVSLDLGFLTKHRQYTFFAPKFIFYATYLSEKIGYWRYITIYRHLEAHPKWSVYPIFKFFEKWCQDENRHGDFFAAILKAQPKWITGWASRLWCRFFLLSVFVTMYLNDLQRKDFYQLIGLDARAFDWHVIRKTNESAARLFPVVLDVDHVDFVRLMDECACAYAHWRETQSVLSLAKIFACLFKLYVIKPINTQALWNTIK.

This sequence belongs to the AcsF family. The cofactor is Fe cation.

The protein localises to the plastid. The protein resides in the chloroplast. The catalysed reaction is Mg-protoporphyrin IX 13-monomethyl ester + 3 NADPH + 3 O2 + 2 H(+) = 3,8-divinyl protochlorophyllide a + 3 NADP(+) + 5 H2O. Its pathway is porphyrin-containing compound metabolism; chlorophyll biosynthesis (light-independent). Catalyzes the formation of the isocyclic ring in chlorophyll biosynthesis. Mediates the cyclase reaction, which results in the formation of divinylprotochlorophyllide (Pchlide) characteristic of all chlorophylls from magnesium-protoporphyrin IX 13-monomethyl ester (MgPMME). The protein is Magnesium-protoporphyrin IX monomethyl ester [oxidative] cyclase of Cyanidioschyzon merolae (strain NIES-3377 / 10D) (Unicellular red alga).